A 312-amino-acid chain; its full sequence is Pseudouridine-5'-phosphate glycosidase 2 (312 aa).

The Proton donor role is filled by glutamate 31. Residues lysine 93 and valine 113 each contribute to the substrate site. Residue aspartate 145 coordinates Mn(2+). Residue 147-149 (SAD) participates in substrate binding. Lysine 166 (nucleophile) is an active-site residue.

The protein belongs to the pseudouridine-5'-phosphate glycosidase family. Homotrimer. The cofactor is Mn(2+).

It catalyses the reaction D-ribose 5-phosphate + uracil = psi-UMP + H2O. Catalyzes the reversible cleavage of pseudouridine 5'-phosphate (PsiMP) to ribose 5-phosphate and uracil. Functions biologically in the cleavage direction, as part of a pseudouridine degradation pathway. The polypeptide is Pseudouridine-5'-phosphate glycosidase 2 (Photorhabdus laumondii subsp. laumondii (strain DSM 15139 / CIP 105565 / TT01) (Photorhabdus luminescens subsp. laumondii)).